Here is a 141-residue protein sequence, read N- to C-terminus: MLMPKRTKYRKQMKGRNRGKAHRGNSIAFGDIAIKAIEHGRIDSRQIESARVAMTRHVKRAGKVWIRVFPDKPLTAKPLETRMGKGKGSVEKWVMNIKPGRIVYEMLGIEEGLAREALALAQSKLPFKTKIVTCESENEIY.

Residues 1–23 are disordered; it reads MLMPKRTKYRKQMKGRNRGKAHR.

This sequence belongs to the universal ribosomal protein uL16 family. As to quaternary structure, part of the 50S ribosomal subunit.

In terms of biological role, binds 23S rRNA and is also seen to make contacts with the A and possibly P site tRNAs. The polypeptide is Large ribosomal subunit protein uL16 (Helicobacter acinonychis (strain Sheeba)).